We begin with the raw amino-acid sequence, 575 residues long: DNA-directed RNA polymerase subunit beta' (575 aa).

Belongs to the RNA polymerase beta' chain family. In plastids the minimal PEP RNA polymerase catalytic core is composed of four subunits: alpha, beta, beta', and beta''. When a (nuclear-encoded) sigma factor is associated with the core the holoenzyme is formed, which can initiate transcription.

It localises to the plastid. The protein localises to the apicoplast. The enzyme catalyses RNA(n) + a ribonucleoside 5'-triphosphate = RNA(n+1) + diphosphate. In terms of biological role, DNA-dependent RNA polymerase catalyzes the transcription of DNA into RNA using the four ribonucleoside triphosphates as substrates. The sequence is that of DNA-directed RNA polymerase subunit beta' (rpoC1) from Plasmodium falciparum (isolate 3D7).